The chain runs to 1501 residues: Ribulose bisphosphate carboxylase (1501 aa).

N111 lines the substrate pocket. K166 functions as the Proton acceptor in the catalytic mechanism. Residue K168 coordinates substrate. 3 residues coordinate Mg(2+): K191, D193, and E194. N6-carboxylysine is present on K191. H287 functions as the Proton acceptor in the catalytic mechanism. 3 residues coordinate substrate: R288, H321, and S368. A propeptide spans 486–508 (SAAAFVGASVAPAKKENVVARQA) (linker). Position 619 (N619) interacts with substrate. Residue K674 is the Proton acceptor of the active site. K676 contributes to the substrate binding site. Mg(2+) is bound by residues K699, D701, and E702. Residue K699 is modified to N6-carboxylysine. H795 functions as the Proton acceptor in the catalytic mechanism. Positions 796, 829, and 876 each coordinate substrate. Positions 994–1016 (SAAAFVGASVAPAKKENVVARQA) are cleaved as a propeptide — linker. N1127 lines the substrate pocket. K1182 serves as the catalytic Proton acceptor. K1184 contacts substrate. Mg(2+)-binding residues include K1207, D1209, and E1210. N6-carboxylysine is present on K1207. The Proton acceptor role is filled by H1303. The substrate site is built by R1304, H1337, and S1384.

This sequence belongs to the RuBisCO large chain family. Type II subfamily. In terms of assembly, homodimer. It depends on Mg(2+) as a cofactor.

It localises to the plastid. It is found in the chloroplast. It catalyses the reaction 2 (2R)-3-phosphoglycerate + 2 H(+) = D-ribulose 1,5-bisphosphate + CO2 + H2O. It carries out the reaction D-ribulose 1,5-bisphosphate + O2 = 2-phosphoglycolate + (2R)-3-phosphoglycerate + 2 H(+). In terms of biological role, ruBisCO catalyzes two reactions: the carboxylation of D-ribulose 1,5-bisphosphate, the primary event in carbon dioxide fixation, as well as the oxidative fragmentation of the pentose substrate. Both reactions occur simultaneously and in competition at the same active site. The protein is Ribulose bisphosphate carboxylase (rbcL) of Symbiodinium sp. (Dinoflagellate).